The following is a 481-amino-acid chain: Argininosuccinate lyase (481 aa).

The protein belongs to the lyase 1 family. Argininosuccinate lyase subfamily.

The protein resides in the cytoplasm. It carries out the reaction 2-(N(omega)-L-arginino)succinate = fumarate + L-arginine. The protein operates within amino-acid biosynthesis; L-arginine biosynthesis; L-arginine from L-ornithine and carbamoyl phosphate: step 3/3. This chain is Argininosuccinate lyase, found in Kineococcus radiotolerans (strain ATCC BAA-149 / DSM 14245 / SRS30216).